A 263-amino-acid chain; its full sequence is UPF0758 protein NGR_c13970 (263 aa).

An MPN domain is found at 141–263; the sequence is VLSSWSAVID…HVSMKGLRLF (123 aa). Residues His212, His214, and Asp225 each contribute to the Zn(2+) site. The JAMM motif motif lies at 212–225; sequence HNHPSGDPTPSRAD.

The protein belongs to the UPF0758 family.

The protein is UPF0758 protein NGR_c13970 of Sinorhizobium fredii (strain NBRC 101917 / NGR234).